Here is a 292-residue protein sequence, read N- to C-terminus: Short chain dehydrogenases/reductase notP' (292 aa).

Residues 1–25 (MPQTSDGNVHAPQYREAKPSQGDPS) are disordered. L48, D97, K158, Y193, K197, I230, and T232 together coordinate NADP(+). Y193 serves as the catalytic Proton donor. Residue K197 is the Lowers pKa of active site Tyr of the active site.

The protein belongs to the short-chain dehydrogenases/reductases (SDR) family.

Functionally, short chain dehydrogenases/reductase; part of the gene cluster that mediates the biosynthesis of notoamide, a fungal indole alkaloid that belongs to a family of natural products containing a characteristic bicyclo[2.2.2]diazaoctane core. The first step of notoamide biosynthesis involves coupling of L-proline and L-tryptophan by the bimodular NRPS notE', to produce cyclo-L-tryptophan-L-proline called brevianamide F. The reverse prenyltransferase notF' then acts as a deoxybrevianamide E synthase and converts brevianamide F to deoxybrevianamide E via reverse prenylation at C-2 of the indole ring leading to the bicyclo[2.2.2]diazaoctane core. Deoxybrevianamide E is further hydroxylated at C-6 of the indole ring, likely catalyzed by the cytochrome P450 monooxygenase notG', to yield 6-hydroxy-deoxybrevianamide E. 6-hydroxy-deoxybrevianamide E is a specific substrate of the prenyltransferase notC' for normal prenylation at C-7 to produce 6-hydroxy-7-prenyl-deoxybrevianamide, also called notoamide S. As the proposed pivotal branching point in notoamide biosynthesis, notoamide S can be diverted to notoamide E through an oxidative pyran ring closure putatively catalyzed by either notH' cytochrome P450 monooxygenase or the notD' FAD-linked oxidoreductase. This step would be followed by an indole 2,3-epoxidation-initiated pinacol-like rearrangement catalyzed by the notB' FAD-dependent monooxygenase leading to the formation of notoamide C and notoamide D. On the other hand notoamide S is converted to notoamide T by notH' (or notD'), a bifunctional oxidase that also functions as the intramolecular Diels-Alderase responsible for generation of (-)-notoamide T. To generate antipodal (+)-notoaminide T, notH (or notD) in Aspergillus strain MF297-2 is expected to catalyze a Diels-Alder reaction leading to the opposite stereochemistry. The remaining oxidoreductase notD' (or notH') likely catalyzes the oxidative pyran ring formation to yield (-)-stephacidin A. The FAD-dependent monooxygenase notI' is highly similar to notB' and is predicted to catalyze a similar conversion from (-)-stephacidin A to (+)-notoamide B via the 2,3-epoxidation of (-)-stephacidin A followed by a pinacol-type rearrangement. Finally, it remains unclear which enzyme could be responsible for the final hydroxylation steps leading to notoamide A and sclerotiamide. The function of notP' in the notoamide biosynthesis has not been determined yet. This is Short chain dehydrogenases/reductase notP' from Aspergillus versicolor.